The sequence spans 83 residues: Hepcidin-2 (83 aa).

The N-terminal stretch at 1 to 26 (MALSTRTQAACLLLLLLASLSSTTYL) is a signal peptide. A propeptide spanning residues 27 to 53 (QQQMRQTTELQPLHGEESRADIAIPMQ) is cleaved from the precursor. Disulfide bonds link Cys65/Cys81, Cys68/Cys71, Cys69/Cys77, and Cys72/Cys80.

Belongs to the hepcidin family. As to expression, highly expressed in the liver and to a much lesser extent in the heart. Also expressed in pancreas.

The protein localises to the secreted. Seems to act as a signaling molecule involved in the maintenance of iron homeostasis. This Mus musculus (Mouse) protein is Hepcidin-2 (Hamp2).